Here is a 272-residue protein sequence, read N- to C-terminus: uncharacterized protein (272 aa).

An N-terminal signal peptide occupies residues 1–22; that stretch reads MEYIKKIALYMSVLLLIIFIGG. C23 carries N-palmitoyl cysteine lipidation. C23 carries the S-diacylglycerol cysteine lipid modification.

Belongs to the staphylococcal tandem lipoprotein family.

The protein localises to the cell membrane. This is an uncharacterized protein from Staphylococcus aureus (strain MRSA252).